Here is a 389-residue protein sequence, read N- to C-terminus: MRPLVAARRRAAACCALAACMLALAFAPAAARAERLKDLAQIQGVRDNPLIGYGLVVGLDGTGDQTMQTPFTTQTLANMLANLGISINNGSANGGGSSAMTNMQLKNVAAVMVTATLPPFARPGEAIDVTVSSLGNAKSLRGGTLLLTPLKGADGQVYALAQGNMAVGGAGASANGSRVQVNQLAAGRIAGGAIVERSVPNAVAQMNGVLQLQLNDMDYGTAQRIVSAVNSSFGAGTATALDGRTIQLTAPADSAQQVAFMARLQNLEVSPERAAAKVILNARTGSIVMNQMVTLQNCAVAHGNLSVVVNTQPVVSQPGPFSNGQTVVAQQSQIQLKQDNGSLRMVTAGANLADVVKALNSLGATPADLMSILQAMKAAGALRADLEII.

An N-terminal signal peptide occupies residues 1–33 (MRPLVAARRRAAACCALAACMLALAFAPAAARA).

Belongs to the FlgI family. In terms of assembly, the basal body constitutes a major portion of the flagellar organelle and consists of four rings (L,P,S, and M) mounted on a central rod.

The protein localises to the periplasm. Its subcellular location is the bacterial flagellum basal body. Its function is as follows. Assembles around the rod to form the L-ring and probably protects the motor/basal body from shearing forces during rotation. The protein is Flagellar P-ring protein of Burkholderia pseudomallei (strain K96243).